A 205-amino-acid polypeptide reads, in one-letter code: NADH-quinone oxidoreductase subunit I (205 aa).

2 4Fe-4S ferredoxin-type domains span residues 75-104 and 114-143; these read RLLE…METS and HEYT…HGGR. [4Fe-4S] cluster contacts are provided by cysteine 84, cysteine 87, cysteine 90, cysteine 94, cysteine 123, cysteine 126, cysteine 129, and cysteine 133.

The protein belongs to the complex I 23 kDa subunit family. NDH-1 is composed of 14 different subunits. Subunits NuoA, H, J, K, L, M, N constitute the membrane sector of the complex. Requires [4Fe-4S] cluster as cofactor.

It localises to the cell inner membrane. The enzyme catalyses a quinone + NADH + 5 H(+)(in) = a quinol + NAD(+) + 4 H(+)(out). In terms of biological role, NDH-1 shuttles electrons from NADH, via FMN and iron-sulfur (Fe-S) centers, to quinones in the respiratory chain. The immediate electron acceptor for the enzyme in this species is believed to be ubiquinone. Couples the redox reaction to proton translocation (for every two electrons transferred, four hydrogen ions are translocated across the cytoplasmic membrane), and thus conserves the redox energy in a proton gradient. The polypeptide is NADH-quinone oxidoreductase subunit I (Wolinella succinogenes (strain ATCC 29543 / DSM 1740 / CCUG 13145 / JCM 31913 / LMG 7466 / NCTC 11488 / FDC 602W) (Vibrio succinogenes)).